A 156-amino-acid polypeptide reads, in one-letter code: ATP synthase subunit b (156 aa).

Residues 3–23 (ITLTIFAQALAFAGLIWIVAT) form a helical membrane-spanning segment.

Belongs to the ATPase B chain family. In terms of assembly, F-type ATPases have 2 components, F(1) - the catalytic core - and F(0) - the membrane proton channel. F(1) has five subunits: alpha(3), beta(3), gamma(1), delta(1), epsilon(1). F(0) has three main subunits: a(1), b(2) and c(10-14). The alpha and beta chains form an alternating ring which encloses part of the gamma chain. F(1) is attached to F(0) by a central stalk formed by the gamma and epsilon chains, while a peripheral stalk is formed by the delta and b chains.

Its subcellular location is the cell inner membrane. Its function is as follows. F(1)F(0) ATP synthase produces ATP from ADP in the presence of a proton or sodium gradient. F-type ATPases consist of two structural domains, F(1) containing the extramembraneous catalytic core and F(0) containing the membrane proton channel, linked together by a central stalk and a peripheral stalk. During catalysis, ATP synthesis in the catalytic domain of F(1) is coupled via a rotary mechanism of the central stalk subunits to proton translocation. Functionally, component of the F(0) channel, it forms part of the peripheral stalk, linking F(1) to F(0). This chain is ATP synthase subunit b, found in Xanthomonas oryzae pv. oryzae (strain MAFF 311018).